Reading from the N-terminus, the 881-residue chain is MEKAKLTKNLKLKIKNAQLTKAAGLDKLKQKLAQAGSSDTKNSSEKPSAKVAEKVVKKKSVVDPSVSATPESVSSETSPRRIRAKNRSSFVSEDLEVSSPVPVDSDTTSSMPPVEEEIASSTDSEPEVIEVTQPPIEEKSEVVTKVPPTPLKEPEVVVKKDPPKSVVGIKSNFGPTGKHINHLLAKTFKAPKKEDKPAPKERSGQAQAKPQQSSEASSENKPHSPNNNRSSQPFYRRDTSKKPGSDFRDRAKKDDNPKAFTGRDRYGLNDGSDDDKWRKKRVQKTKKHYDEHTIQRPTHIKVPLPITIKDLAAEMKLKASELIQKMFIHGMTYVVNDVLDNETTVQFIGLEFGCTIDIDSSEQDKLCIESNTVKEEIQETDPSKLIIRPPIVAFMGHVDHGKTTLIDSLRKSNIAAVEAGAITQHMGAFCCSTPVGNITILDTPGHEAFSAMRARGAEVCDIVVLVVAGDEGIKEQTLEAVKHARAANITIVVAINKCDKPNFNAETIYRQLSEINLLPEAWGGTTVTVNTSAKTGEGLPELLEMLALQAEVLELKANPSARARGIVIESELHKGLGAVATILVQNGTLHLGEALVFNDCYGKVKTMHDEHNRLMKVASPSVPALITGLSSMPKAGDPFVVVKNEKIAKDIIGARLAGQQKFALQKKRPNFDAMLQNKKILKLIIKADVQGSIEALASSILKIVSDKVSAEILSNSVGEISESDIRLAAASKAVIIGFHTGIESHAESLIKSLGVKVQLFNIIYHAVDAVKEMMTALLDPIAEEKNLGSAEIKETFKSSQLGTIYGCLVSEGVMTRNQKVRVVRNNDVLWKGTLSSLKRIKEDVKEVKKGLECGILLEGYQNAQVGDILQCYEVIYHPQKL.

Disordered stretches follow at residues 31-147 and 165-291; these read KLAQ…TKVP and SVVG…HYDE. Positions 42 to 55 are enriched in basic and acidic residues; sequence NSSEKPSAKVAEKV. A compositionally biased stretch (polar residues) spans 68–77; that stretch reads ATPESVSSET. Over residues 114–128 the composition is skewed to acidic residues; that stretch reads VEEEIASSTDSEPEV. The span at 191–203 shows a compositional bias: basic and acidic residues; it reads PKKEDKPAPKERS. Positions 204–233 are enriched in polar residues; it reads GQAQAKPQQSSEASSENKPHSPNNNRSSQP. Basic and acidic residues predominate over residues 235-267; the sequence is YRRDTSKKPGSDFRDRAKKDDNPKAFTGRDRYG. The span at 278 to 287 shows a compositional bias: basic residues; it reads RKKRVQKTKK. The tr-type G domain occupies 387-556; that stretch reads IRPPIVAFMG…ALQAEVLELK (170 aa). A G1 region spans residues 396–403; sequence GHVDHGKT. A GTP-binding site is contributed by 396 to 403; it reads GHVDHGKT. The tract at residues 421–425 is G2; the sequence is AITQH. The G3 stretch occupies residues 442-445; it reads DTPG. GTP-binding positions include 442–446 and 496–499; these read DTPGH and NKCD. The interval 496-499 is G4; sequence NKCD. The segment at 532-534 is G5; the sequence is SAK.

It belongs to the TRAFAC class translation factor GTPase superfamily. Classic translation factor GTPase family. IF-2 subfamily.

It localises to the cytoplasm. Functionally, one of the essential components for the initiation of protein synthesis. Protects formylmethionyl-tRNA from spontaneous hydrolysis and promotes its binding to the 30S ribosomal subunits. Also involved in the hydrolysis of GTP during the formation of the 70S ribosomal complex. This chain is Translation initiation factor IF-2, found in Chlamydia felis (strain Fe/C-56) (Chlamydophila felis).